Reading from the N-terminus, the 275-residue chain is uncharacterized protein (275 aa).

A run of 6 helical transmembrane segments spans residues 25 to 45 (LGYFAFGGVFILLGVLAFMTA), 70 to 90 (LLFFIGIGLIGYVIWMVLSAI), 107 to 127 (IGNFFSAAVYTSIAWNALRFV), 149 to 169 (FGQWLTGLTGAGFIVFAIVQF), 203 to 223 (IARAIIFSAIGYFLIKTAMTA), and 247 to 267 (ILSILALGLILYGMYAIMKGI).

The protein localises to the cell membrane. This is an uncharacterized protein from Bacillus subtilis (strain 168).